The following is a 250-amino-acid chain: tRNA (guanine-N(1)-)-methyltransferase (250 aa).

Residues Gly116 and 136 to 141 (IGDYVL) contribute to the S-adenosyl-L-methionine site.

The protein belongs to the RNA methyltransferase TrmD family. Homodimer.

Its subcellular location is the cytoplasm. The enzyme catalyses guanosine(37) in tRNA + S-adenosyl-L-methionine = N(1)-methylguanosine(37) in tRNA + S-adenosyl-L-homocysteine + H(+). In terms of biological role, specifically methylates guanosine-37 in various tRNAs. In Pseudomonas fluorescens (strain SBW25), this protein is tRNA (guanine-N(1)-)-methyltransferase.